The following is a 383-amino-acid chain: Histidine decarboxylase (383 aa).

His120 provides a ligand contact to substrate. Lys233 is modified (N6-(pyridoxal phosphate)lysine).

It belongs to the group II decarboxylase family. In terms of assembly, homotetramer. It depends on pyridoxal 5'-phosphate as a cofactor.

The enzyme catalyses L-histidine + H(+) = histamine + CO2. This chain is Histidine decarboxylase, found in Acinetobacter baumannii (strain AB307-0294).